The chain runs to 318 residues: NADH-ubiquinone oxidoreductase chain 1 (318 aa).

The next 8 membrane-spanning stretches (helical) occupy residues 2–22 (FMIN…FLTL), 70–90 (MFIL…IPLP), 100–120 (LGVL…LWSG), 147–167 (AIIL…TLII), 172–192 (TWLI…TLAE), 222–242 (LFFM…AILF), 253–273 (ELYT…FLWI), and 294–314 (LPLT…TSGI).

Belongs to the complex I subunit 1 family. In terms of assembly, core subunit of respiratory chain NADH dehydrogenase (Complex I) which is composed of 45 different subunits.

It localises to the mitochondrion inner membrane. The enzyme catalyses a ubiquinone + NADH + 5 H(+)(in) = a ubiquinol + NAD(+) + 4 H(+)(out). Its function is as follows. Core subunit of the mitochondrial membrane respiratory chain NADH dehydrogenase (Complex I) which catalyzes electron transfer from NADH through the respiratory chain, using ubiquinone as an electron acceptor. Essential for the catalytic activity and assembly of complex I. The protein is NADH-ubiquinone oxidoreductase chain 1 (MT-ND1) of Bos mutus grunniens (Wild yak).